Here is a 106-residue protein sequence, read N- to C-terminus: Prothymosin alpha-B (106 aa).

Residues 1-39 (MADAKVDSATEISAKDLKEKKLIEEKENGKDATNGKENE) show a composition bias toward basic and acidic residues. The tract at residues 1–106 (MADAKVDSAT…DVDPKKQKVN (106 aa)) is disordered. Serine 8 carries the post-translational modification Phosphoserine. Threonine 10 carries the post-translational modification Phosphothreonine. Acidic residues-rich tracts occupy residues 40-76 (ENGE…DEDL) and 85-98 (DDDE…EDDV).

The protein belongs to the pro/parathymosin family. Uniformly expressed in all embryonic cells at 4 and 8 hpf. At the 20-somite stage (18 hpf), ubiquitously expressed in the developing nervous system, in the tail bud and in the pronephric ducts. Also expressed in some placodes, including the anterior lateral line placode, otic vesicle and olfactory placode. At 27 hpf, strong expression persists in the central nervous system and the olfactory placode. Expressed strongly in the eyes and the pectoral fin buds. In the tail region, expressed in the spinal cord, in the posterior lateral line precursors, and persists in the pronephric ducts. At 48 hpf, expressed in all head territories including the developing brain, eyes, and pharyngeal arches. More caudally, expression persists in the pectoral fin buds, the spinal cord and, for the first time, appears in the intestine. At 72 hpf, expressed only in restricted regions of the brain, in pharyngeal arches region and in the amacrine cells and the horizontal cells of the retina.

The protein resides in the nucleus. This is Prothymosin alpha-B from Danio rerio (Zebrafish).